A 453-amino-acid chain; its full sequence is Probable glycine dehydrogenase (decarboxylating) subunit 1 (453 aa).

This sequence belongs to the GcvP family. N-terminal subunit subfamily. In terms of assembly, the glycine cleavage system is composed of four proteins: P, T, L and H. In this organism, the P 'protein' is a heterodimer of two subunits.

It catalyses the reaction N(6)-[(R)-lipoyl]-L-lysyl-[glycine-cleavage complex H protein] + glycine + H(+) = N(6)-[(R)-S(8)-aminomethyldihydrolipoyl]-L-lysyl-[glycine-cleavage complex H protein] + CO2. Its function is as follows. The glycine cleavage system catalyzes the degradation of glycine. The P protein binds the alpha-amino group of glycine through its pyridoxal phosphate cofactor; CO(2) is released and the remaining methylamine moiety is then transferred to the lipoamide cofactor of the H protein. This is Probable glycine dehydrogenase (decarboxylating) subunit 1 from Methylococcus capsulatus (strain ATCC 33009 / NCIMB 11132 / Bath).